The sequence spans 473 residues: Photosystem II CP43 reaction center protein (473 aa).

The propeptide occupies Met1 to Glu14. An N-acetylthreonine modification is found at Thr15. Thr15 is modified (phosphothreonine). A run of 5 helical transmembrane segments spans residues Leu69–Ala93, Leu134–Asn155, Lys178–Thr200, Lys255–Ser275, and Trp291–Ala312. Glu367 provides a ligand contact to [CaMn4O5] cluster. The helical transmembrane segment at Arg447–Pro471 threads the bilayer.

The protein belongs to the PsbB/PsbC family. PsbC subfamily. In terms of assembly, PSII is composed of 1 copy each of membrane proteins PsbA, PsbB, PsbC, PsbD, PsbE, PsbF, PsbH, PsbI, PsbJ, PsbK, PsbL, PsbM, PsbT, PsbX, PsbY, PsbZ, Psb30/Ycf12, at least 3 peripheral proteins of the oxygen-evolving complex and a large number of cofactors. It forms dimeric complexes. It depends on Binds multiple chlorophylls and provides some of the ligands for the Ca-4Mn-5O cluster of the oxygen-evolving complex. It may also provide a ligand for a Cl- that is required for oxygen evolution. PSII binds additional chlorophylls, carotenoids and specific lipids. as a cofactor.

The protein resides in the plastid. The protein localises to the chloroplast thylakoid membrane. In terms of biological role, one of the components of the core complex of photosystem II (PSII). It binds chlorophyll and helps catalyze the primary light-induced photochemical processes of PSII. PSII is a light-driven water:plastoquinone oxidoreductase, using light energy to abstract electrons from H(2)O, generating O(2) and a proton gradient subsequently used for ATP formation. The sequence is that of Photosystem II CP43 reaction center protein from Eucalyptus globulus subsp. globulus (Tasmanian blue gum).